The following is a 104-amino-acid chain: Large ribosomal subunit protein uL24 (104 aa).

The protein belongs to the universal ribosomal protein uL24 family. In terms of assembly, part of the 50S ribosomal subunit.

Functionally, one of two assembly initiator proteins, it binds directly to the 5'-end of the 23S rRNA, where it nucleates assembly of the 50S subunit. Its function is as follows. One of the proteins that surrounds the polypeptide exit tunnel on the outside of the subunit. The polypeptide is Large ribosomal subunit protein uL24 (Bradyrhizobium diazoefficiens (strain JCM 10833 / BCRC 13528 / IAM 13628 / NBRC 14792 / USDA 110)).